The primary structure comprises 282 residues: Putative glycosyltransferase HI_0765 (282 aa).

Belongs to the glycosyltransferase 25 family.

The polypeptide is Putative glycosyltransferase HI_0765 (Haemophilus influenzae (strain ATCC 51907 / DSM 11121 / KW20 / Rd)).